We begin with the raw amino-acid sequence, 179 residues long: Large ribosomal subunit protein uL5 (179 aa).

It belongs to the universal ribosomal protein uL5 family. As to quaternary structure, part of the 50S ribosomal subunit; part of the 5S rRNA/L5/L18/L25 subcomplex. Contacts the 5S rRNA and the P site tRNA. Forms a bridge to the 30S subunit in the 70S ribosome.

Functionally, this is one of the proteins that bind and probably mediate the attachment of the 5S RNA into the large ribosomal subunit, where it forms part of the central protuberance. In the 70S ribosome it contacts protein S13 of the 30S subunit (bridge B1b), connecting the 2 subunits; this bridge is implicated in subunit movement. Contacts the P site tRNA; the 5S rRNA and some of its associated proteins might help stabilize positioning of ribosome-bound tRNAs. The protein is Large ribosomal subunit protein uL5 of Shewanella pealeana (strain ATCC 700345 / ANG-SQ1).